A 167-amino-acid polypeptide reads, in one-letter code: Probable glutathione peroxidase 8 (167 aa).

The active site involves C41.

Belongs to the glutathione peroxidase family.

The enzyme catalyses 2 glutathione + H2O2 = glutathione disulfide + 2 H2O. Functionally, may constitute a glutathione peroxidase-like protective system against oxidative stresses. In Arabidopsis thaliana (Mouse-ear cress), this protein is Probable glutathione peroxidase 8 (GPX8).